A 341-amino-acid polypeptide reads, in one-letter code: Dihydroorotate dehydrogenase (quinone) (341 aa).

FMN is bound by residues 62–66 (AGMDK) and threonine 86. Substrate is bound at residue lysine 66. 111–115 (NRMGF) serves as a coordination point for substrate. The FMN site is built by asparagine 139 and asparagine 172. Asparagine 172 is a binding site for substrate. Serine 175 acts as the Nucleophile in catalysis. Residue asparagine 177 participates in substrate binding. Residues lysine 217 and threonine 245 each coordinate FMN. 246-247 (NT) is a binding site for substrate. Residues glycine 268, glycine 297, and 318–319 (YS) each bind FMN.

Belongs to the dihydroorotate dehydrogenase family. Type 2 subfamily. As to quaternary structure, monomer. Requires FMN as cofactor.

It localises to the cell membrane. It carries out the reaction (S)-dihydroorotate + a quinone = orotate + a quinol. It functions in the pathway pyrimidine metabolism; UMP biosynthesis via de novo pathway; orotate from (S)-dihydroorotate (quinone route): step 1/1. In terms of biological role, catalyzes the conversion of dihydroorotate to orotate with quinone as electron acceptor. This chain is Dihydroorotate dehydrogenase (quinone), found in Shewanella loihica (strain ATCC BAA-1088 / PV-4).